A 77-amino-acid chain; its full sequence is Acyl carrier protein (77 aa).

A Carrier domain is found at 2–77 (SDIADRVKKI…DAVKFIQGAV (76 aa)). Serine 37 is subject to O-(pantetheine 4'-phosphoryl)serine.

The protein belongs to the acyl carrier protein (ACP) family. Post-translationally, 4'-phosphopantetheine is transferred from CoA to a specific serine of apo-ACP by AcpS. This modification is essential for activity because fatty acids are bound in thioester linkage to the sulfhydryl of the prosthetic group.

Its subcellular location is the cytoplasm. Its pathway is lipid metabolism; fatty acid biosynthesis. Its function is as follows. Carrier of the growing fatty acid chain in fatty acid biosynthesis. In Paracoccus denitrificans (strain Pd 1222), this protein is Acyl carrier protein.